We begin with the raw amino-acid sequence, 568 residues long: Urease subunit alpha (568 aa).

Residues 129 to 568 (GAIDSHIHFI…LPMAQRYFLF (440 aa)) form the Urease domain. Residues histidine 134, histidine 136, and lysine 217 each contribute to the Ni(2+) site. An N6-carboxylysine modification is found at lysine 217. Residue histidine 219 participates in substrate binding. 2 residues coordinate Ni(2+): histidine 246 and histidine 272. Catalysis depends on histidine 320, which acts as the Proton donor. Aspartate 360 is a binding site for Ni(2+).

Belongs to the metallo-dependent hydrolases superfamily. Urease alpha subunit family. Heterotrimer of UreA (gamma), UreB (beta) and UreC (alpha) subunits. Three heterotrimers associate to form the active enzyme. Ni cation is required as a cofactor. In terms of processing, carboxylation allows a single lysine to coordinate two nickel ions.

It is found in the cytoplasm. It carries out the reaction urea + 2 H2O + H(+) = hydrogencarbonate + 2 NH4(+). It participates in nitrogen metabolism; urea degradation; CO(2) and NH(3) from urea (urease route): step 1/1. In Saccharophagus degradans (strain 2-40 / ATCC 43961 / DSM 17024), this protein is Urease subunit alpha.